The following is a 507-amino-acid chain: Cobyric acid synthase (507 aa).

The 203-residue stretch at 249–451 folds into the GATase cobBQ-type domain; the sequence is DIEIAVINLP…IHGIFENREF (203 aa). C330 serves as the catalytic Nucleophile. Residue H443 is part of the active site.

Belongs to the CobB/CobQ family. CobQ subfamily.

Its pathway is cofactor biosynthesis; adenosylcobalamin biosynthesis. Catalyzes amidations at positions B, D, E, and G on adenosylcobyrinic A,C-diamide. NH(2) groups are provided by glutamine, and one molecule of ATP is hydrogenolyzed for each amidation. The polypeptide is Cobyric acid synthase (Thermoanaerobacter sp. (strain X514)).